Here is a 74-residue protein sequence, read N- to C-terminus: Protein kish-B (74 aa).

A signal peptide spans 1 to 22 (MTNVYSFDGILVFGLLFICTCA). Residues 23–52 (YLKKVPRLNSWLLSEKKGVWGVFYKAAVIG) lie on the Extracellular side of the membrane. The helical transmembrane segment at 53-73 (TRLHVVVAASCLCMAFYLIFL) threads the bilayer. Lys74 is a topological domain (cytoplasmic).

It belongs to the KISH family.

Its subcellular location is the golgi apparatus membrane. In terms of biological role, involved in the early part of the secretory pathway. In Danio rerio (Zebrafish), this protein is Protein kish-B (tmem167b).